Here is a 354-residue protein sequence, read N- to C-terminus: Methylthioribose-1-phosphate isomerase (354 aa).

The active-site Proton donor is Asp-246.

Belongs to the eIF-2B alpha/beta/delta subunits family. MtnA subfamily.

The protein resides in the cytoplasm. The protein localises to the nucleus. The enzyme catalyses 5-(methylsulfanyl)-alpha-D-ribose 1-phosphate = 5-(methylsulfanyl)-D-ribulose 1-phosphate. The protein operates within amino-acid biosynthesis; L-methionine biosynthesis via salvage pathway; L-methionine from S-methyl-5-thio-alpha-D-ribose 1-phosphate: step 1/6. In terms of biological role, catalyzes the interconversion of methylthioribose-1-phosphate (MTR-1-P) into methylthioribulose-1-phosphate (MTRu-1-P). The sequence is that of Methylthioribose-1-phosphate isomerase (mri1) from Xenopus tropicalis (Western clawed frog).